The sequence spans 158 residues: NADH-quinone oxidoreductase subunit B (158 aa).

Cysteine 37, cysteine 38, cysteine 102, and cysteine 132 together coordinate [4Fe-4S] cluster.

It belongs to the complex I 20 kDa subunit family. As to quaternary structure, NDH-1 is composed of 14 different subunits. Subunits NuoB, C, D, E, F, and G constitute the peripheral sector of the complex. [4Fe-4S] cluster serves as cofactor.

It localises to the cell inner membrane. The enzyme catalyses a quinone + NADH + 5 H(+)(in) = a quinol + NAD(+) + 4 H(+)(out). NDH-1 shuttles electrons from NADH, via FMN and iron-sulfur (Fe-S) centers, to quinones in the respiratory chain. The immediate electron acceptor for the enzyme in this species is believed to be ubiquinone. Couples the redox reaction to proton translocation (for every two electrons transferred, four hydrogen ions are translocated across the cytoplasmic membrane), and thus conserves the redox energy in a proton gradient. In Thiobacillus denitrificans (strain ATCC 25259 / T1), this protein is NADH-quinone oxidoreductase subunit B.